A 221-amino-acid polypeptide reads, in one-letter code: LHFPL tetraspan subfamily member 5 protein (221 aa).

Residues 1–24 (MPKLLPAQEAARIYHTNYVRNARA) are Cytoplasmic-facing. The helical transmembrane segment at 25 to 45 (MGVLWALFTLCFSILMVVTFI) threads the bilayer. At 46–98 (QPYWIGDSIDTPQAGYFGLFSYCIGNALTGELICKGSPLDFGTIPSSAFKTAM) the chain is on the extracellular side. The chain crosses the membrane as a helical span at residues 99–119 (FFVGISTFLIIGSILCFSLFF). At 120 to 128 (FCNAATVYK) the chain is on the cytoplasmic side. The helical transmembrane segment at 129–149 (VCAWMQLAAATGLMIGCLIYP) threads the bilayer. Topologically, residues 150 to 179 (DGWDSSEVKRMCGDKTDKYTLGACTVRWAY) are extracellular. A helical membrane pass occupies residues 180–200 (ILCIIGILDALILSFLAFVLG). Residues 201–221 (NRQDNLLPSDFKVESKEEGNE) lie on the Cytoplasmic side of the membrane.

The protein belongs to the LHFP family.

The protein localises to the cell membrane. Probable component of the mechanotransducer (MET) non-specific cation channel complex. In Gallus gallus (Chicken), this protein is LHFPL tetraspan subfamily member 5 protein.